Consider the following 316-residue polypeptide: Remorin 4.1 (316 aa).

Disordered regions lie at residues 1 to 108 (MLSE…PSEL), 125 to 202 (NANA…SVGQ), and 267 to 287 (AQNEVAKARRKAEEKRASAEA). Residues 40–53 (EREEEVVVEEELEE) are compositionally biased toward acidic residues. Polar residues predominate over residues 92–104 (RHTSIRSVGSDTA). Residues 125-135 (NANAAAAAAAN) are compositionally biased toward low complexity. Basic and acidic residues-rich tracts occupy residues 143–153 (GVDDALGRIGE) and 277–287 (KAEEKRASAEA). A coiled-coil region spans residues 242 to 288 (VEKANAWLKKYERKLEEKRAKAMEKAQNEVAKARRKAEEKRASAEAK).

The protein belongs to the remorin family. As to quaternary structure, interacts with BAK1. Post-translationally, phosphorylated by BRI1. Phosphorylation reduces the binding affinity to BAK1. As to expression, expressed in roots, leaf blades and leaf sheaths. Expressed at low levels in stems and spikelets.

It localises to the cell membrane. Its function is as follows. Functions in abscisic acid (ABA) signaling downstream of BZIP23. Acts as antagonistic and negative regulator of brassinosteroid (BR) signaling. Binds to BAK1 and inhibits its interaction with the BR receptor BRI1. Inhibits the formation and subsequent activation of the BRI1-BAK1 receptor complex. This chain is Remorin 4.1, found in Oryza sativa subsp. japonica (Rice).